A 141-amino-acid polypeptide reads, in one-letter code: NADH dehydrogenase [ubiquinone] 1 alpha subcomplex subunit 11 (141 aa).

A run of 2 helical transmembrane segments spans residues 21 to 43 (KTYI…RVSL) and 58 to 80 (RYTF…SAQV).

The protein belongs to the complex I NDUFA11 subunit family. In terms of assembly, complex I is composed of 45 different subunits.

It is found in the mitochondrion inner membrane. In terms of biological role, accessory subunit of the mitochondrial membrane respiratory chain NADH dehydrogenase (Complex I), that is believed not to be involved in catalysis. Complex I functions in the transfer of electrons from NADH to the respiratory chain. The immediate electron acceptor for the enzyme is believed to be ubiquinone. The protein is NADH dehydrogenase [ubiquinone] 1 alpha subcomplex subunit 11 (Ndufa11) of Mus musculus (Mouse).